A 50-amino-acid chain; its full sequence is Insulin (50 aa).

Intrachain disulfides connect cysteine 7-cysteine 36, cysteine 19-cysteine 49, and cysteine 35-cysteine 40.

Belongs to the insulin family. As to quaternary structure, heterodimer of a B chain and an A chain linked by two disulfide bonds.

The protein localises to the secreted. In terms of biological role, insulin decreases blood glucose concentration. It increases cell permeability to monosaccharides, amino acids and fatty acids. It accelerates glycolysis, the pentose phosphate cycle, and glycogen synthesis in liver. The protein is Insulin (INS) of Proechimys guairae (Guaira spiny rat).